Here is a 289-residue protein sequence, read N- to C-terminus: Thioredoxin-like protein 1 (289 aa).

The Thioredoxin domain maps to 2–109 (VGVKPVGSDP…EEKIKQHLEN (108 aa)). An intrachain disulfide couples C34 to C37. S113 is modified (phosphoserine). In terms of domain architecture, PITH spans 115-285 (EDTDIPKGYM…NDFKRVVGKK (171 aa)).

In terms of assembly, component of the 19S regulatory cap of the 26S proteasome. Interacts with PSMD14/RPN11. Interacts with, and reduces EEF1A1. In terms of tissue distribution, ubiquitous.

It localises to the cytoplasm. The protein resides in the nucleus. Functionally, active thioredoxin with a redox potential of about -250 mV. This is Thioredoxin-like protein 1 (TXNL1) from Homo sapiens (Human).